A 311-amino-acid chain; its full sequence is 4-diphosphocytidyl-2-C-methyl-D-erythritol kinase (311 aa).

The active site involves K13. ATP is bound at residue 114–124 (PVAGGMAGGSA). D156 is a catalytic residue.

Belongs to the GHMP kinase family. IspE subfamily.

It catalyses the reaction 4-CDP-2-C-methyl-D-erythritol + ATP = 4-CDP-2-C-methyl-D-erythritol 2-phosphate + ADP + H(+). The protein operates within isoprenoid biosynthesis; isopentenyl diphosphate biosynthesis via DXP pathway; isopentenyl diphosphate from 1-deoxy-D-xylulose 5-phosphate: step 3/6. Functionally, catalyzes the phosphorylation of the position 2 hydroxy group of 4-diphosphocytidyl-2C-methyl-D-erythritol. This Corynebacterium diphtheriae (strain ATCC 700971 / NCTC 13129 / Biotype gravis) protein is 4-diphosphocytidyl-2-C-methyl-D-erythritol kinase.